A 98-amino-acid chain; its full sequence is Citrate lyase acyl carrier protein (98 aa).

Residue Ser14 is modified to O-(phosphoribosyl dephospho-coenzyme A)serine.

It belongs to the CitD family. Oligomer with a subunit composition of (alpha,beta,gamma)6.

It is found in the cytoplasm. Its function is as follows. Covalent carrier of the coenzyme of citrate lyase. This Shigella boydii serotype 18 (strain CDC 3083-94 / BS512) protein is Citrate lyase acyl carrier protein.